The primary structure comprises 105 residues: Large ribosomal subunit protein bL21 (105 aa).

It belongs to the bacterial ribosomal protein bL21 family. Part of the 50S ribosomal subunit. Contacts protein L20.

This protein binds to 23S rRNA in the presence of protein L20. The polypeptide is Large ribosomal subunit protein bL21 (Rickettsia typhi (strain ATCC VR-144 / Wilmington)).